The primary structure comprises 78 residues: Translation initiation factor IF-1 (78 aa).

An S1-like domain is found at 2–78 (SKNNLNETES…TQARITYRFK (77 aa)).

The protein belongs to the IF-1 family. Component of the 30S ribosomal translation pre-initiation complex which assembles on the 30S ribosome in the order IF-2 and IF-3, IF-1 and N-formylmethionyl-tRNA(fMet); mRNA recruitment can occur at any time during PIC assembly.

Its subcellular location is the cytoplasm. In terms of biological role, one of the essential components for the initiation of protein synthesis. Stabilizes the binding of IF-2 and IF-3 on the 30S subunit to which N-formylmethionyl-tRNA(fMet) subsequently binds. Helps modulate mRNA selection, yielding the 30S pre-initiation complex (PIC). Upon addition of the 50S ribosomal subunit IF-1, IF-2 and IF-3 are released leaving the mature 70S translation initiation complex. This is Translation initiation factor IF-1 from Aster yellows witches'-broom phytoplasma (strain AYWB).